The sequence spans 344 residues: Heat-inducible transcription repressor HrcA (344 aa).

The protein belongs to the HrcA family.

Negative regulator of class I heat shock genes (grpE-dnaK-dnaJ and groELS operons). Prevents heat-shock induction of these operons. In Streptococcus pneumoniae (strain P1031), this protein is Heat-inducible transcription repressor HrcA.